The primary structure comprises 546 residues: Probable protein kinase UbiB (546 aa).

Positions 124–502 (DFDITPLASA…RVKQGQSRYL (379 aa)) constitute a Protein kinase domain. Residues 130 to 138 (LASASIAQV) and K153 contribute to the ATP site. D288 serves as the catalytic Proton acceptor. 2 helical membrane-spanning segments follow: residues 501–518 (YLFGIGATLMLSSTLLFI) and 523–542 (WGMSPGWLMAGGILVWLIGW).

It belongs to the ABC1 family. UbiB subfamily.

Its subcellular location is the cell inner membrane. It participates in cofactor biosynthesis; ubiquinone biosynthesis [regulation]. Functionally, is probably a protein kinase regulator of UbiI activity which is involved in aerobic coenzyme Q (ubiquinone) biosynthesis. The sequence is that of Probable protein kinase UbiB from Cronobacter sakazakii (strain ATCC BAA-894) (Enterobacter sakazakii).